Here is a 211-residue protein sequence, read N- to C-terminus: Endo-1,4-beta-xylanase 4 (211 aa).

The signal sequence occupies residues 1–16 (MKVTAAFAGLLVTAFA). The region spanning 19 to 210 (VPEPVLVSRS…GACSASVTIS (192 aa)) is the GH11 domain. N101 carries an N-linked (GlcNAc...) asparagine glycan. The active-site Nucleophile is the E106. E197 acts as the Proton donor in catalysis.

It belongs to the glycosyl hydrolase 11 (cellulase G) family.

It localises to the secreted. The catalysed reaction is Endohydrolysis of (1-&gt;4)-beta-D-xylosidic linkages in xylans.. The protein operates within glycan degradation; xylan degradation. Functionally, endo-1,4-beta-xylanase involved in the hydrolysis of xylan, a major structural heterogeneous polysaccharide found in plant biomass representing the second most abundant polysaccharide in the biosphere, after cellulose. The protein is Endo-1,4-beta-xylanase 4 (XYN4) of Aspergillus niger.